A 275-amino-acid polypeptide reads, in one-letter code: 3-methyl-2-oxobutanoate hydroxymethyltransferase (275 aa).

Mg(2+) contacts are provided by D49 and D88. 3-methyl-2-oxobutanoate is bound by residues D49–S50, D88, and K118. Residue E120 coordinates Mg(2+). Catalysis depends on E187, which acts as the Proton acceptor.

The protein belongs to the PanB family. In terms of assembly, homodecamer; pentamer of dimers. Mg(2+) serves as cofactor.

Its subcellular location is the cytoplasm. It carries out the reaction 3-methyl-2-oxobutanoate + (6R)-5,10-methylene-5,6,7,8-tetrahydrofolate + H2O = 2-dehydropantoate + (6S)-5,6,7,8-tetrahydrofolate. It functions in the pathway cofactor biosynthesis; (R)-pantothenate biosynthesis; (R)-pantoate from 3-methyl-2-oxobutanoate: step 1/2. Its function is as follows. Catalyzes the reversible reaction in which hydroxymethyl group from 5,10-methylenetetrahydrofolate is transferred onto alpha-ketoisovalerate to form ketopantoate. The sequence is that of 3-methyl-2-oxobutanoate hydroxymethyltransferase from Bordetella petrii (strain ATCC BAA-461 / DSM 12804 / CCUG 43448).